Consider the following 202-residue polypeptide: LexA repressor (202 aa).

Catalysis depends on for autocatalytic cleavage activity residues Ser-123 and Lys-159.

It belongs to the peptidase S24 family. In terms of assembly, homodimer.

The catalysed reaction is Hydrolysis of Ala-|-Gly bond in repressor LexA.. Functionally, binds the consensus sequence 5'-TGTTC-N(4)-GAACA-3'; some genes have a tandem consensus sequence, at high concentrations their binding is cooperative. Binds to the promoters of a number of genes, including dinB, imuA, lexA, recA, recQ, splB and uvrA. Represses a number of genes involved in the response to DNA damage (SOS response). In the presence of single-stranded DNA, RecA interacts with LexA causing an autocatalytic cleavage which disrupts the DNA-binding part of LexA, leading to derepression of the SOS regulon and eventually DNA repair. This chain is LexA repressor, found in Verrucomicrobium spinosum (strain ATCC 43997 / DSM 4136 / JCM 18804 / IFAM 1439).